The chain runs to 232 residues: MRLKIGIIGAMAQEVEILRNLMVEAKVIKMAGCKIYDGKINNTKVALLQSGIGKVSAAIGTTLLLELTKPDMVINTGSAGGLDANLNVGDIVISTEVRHHDADVTAFGYEKGQLPANPAAFLPNEQLVSVALKETQTAGFNAVSGLICSGDVFVNGAEKIAQIRQDFPNVAAVEMEAAAIAQVCHAFNVPFVVVRAISDVADKESHLSFDEFLPLAAKNSSEIVVAMLNNFA.

E14 acts as the Proton acceptor in catalysis. Residues G80, V154, and 175–176 (ME) each bind substrate. D199 functions as the Proton donor in the catalytic mechanism.

The protein belongs to the PNP/UDP phosphorylase family. MtnN subfamily.

It catalyses the reaction S-adenosyl-L-homocysteine + H2O = S-(5-deoxy-D-ribos-5-yl)-L-homocysteine + adenine. The enzyme catalyses S-methyl-5'-thioadenosine + H2O = 5-(methylsulfanyl)-D-ribose + adenine. It carries out the reaction 5'-deoxyadenosine + H2O = 5-deoxy-D-ribose + adenine. The protein operates within amino-acid biosynthesis; L-methionine biosynthesis via salvage pathway; S-methyl-5-thio-alpha-D-ribose 1-phosphate from S-methyl-5'-thioadenosine (hydrolase route): step 1/2. In terms of biological role, catalyzes the irreversible cleavage of the glycosidic bond in both 5'-methylthioadenosine (MTA) and S-adenosylhomocysteine (SAH/AdoHcy) to adenine and the corresponding thioribose, 5'-methylthioribose and S-ribosylhomocysteine, respectively. Also cleaves 5'-deoxyadenosine, a toxic by-product of radical S-adenosylmethionine (SAM) enzymes, into 5-deoxyribose and adenine. This chain is 5'-methylthioadenosine/S-adenosylhomocysteine nucleosidase, found in Actinobacillus pleuropneumoniae serotype 3 (strain JL03).